We begin with the raw amino-acid sequence, 221 residues long: uncharacterized protein (221 aa).

The signal sequence occupies residues M1–S26.

This is an uncharacterized protein from Mycobacterium tuberculosis (strain ATCC 25618 / H37Rv).